Consider the following 412-residue polypeptide: DnaJ homolog subfamily A member 2 (412 aa).

One can recognise a J domain in the interval 8–70; it reads KLYDILGVPP…EKRELYDRYG (63 aa). The residue at position 39 (Lys39) is an N6-acetyllysine. Residues Ser78 and Ser123 each carry the phosphoserine modification. Residues 130–214 form a CR-type zinc finger; sequence GKTTKLQLSK…CEGKKVIKEV (85 aa). Residue Lys134 forms a Glycyl lysine isopeptide (Lys-Gly) (interchain with G-Cter in SUMO2) linkage. 2 residues coordinate Zn(2+): Cys143 and Cys146. Residues 143–150 form a CXXCXGXG motif repeat; sequence CSACSGQG. Residue Lys152 is modified to N6-acetyllysine. Zn(2+) contacts are provided by Cys159, Cys162, Cys186, Cys189, Cys202, and Cys205. 3 CXXCXGXG motif repeats span residues 159–166, 186–193, and 202–209; these read CSACRGRG, CSDCNGEG, and CKKCEGKK. The disordered stretch occupies residues 365–412; the sequence is IGETEEVELQEFDSTRGSGGGQRREAYNDSSDEESSSHHGPGVQCAHQ. Tyr391 is modified (phosphotyrosine). Residues Ser394 and Ser395 each carry the phosphoserine modification. Cys409 carries the post-translational modification Cysteine methyl ester. Cys409 carries S-farnesyl cysteine lipidation. A propeptide spans 410 to 412 (removed in mature form); the sequence is AHQ.

Its subcellular location is the membrane. Co-chaperone of Hsc70. Stimulates ATP hydrolysis and the folding of unfolded proteins mediated by HSPA1A/B (in vitro). In Mus musculus (Mouse), this protein is DnaJ homolog subfamily A member 2 (Dnaja2).